We begin with the raw amino-acid sequence, 133 residues long: Type VI secretion amidase effector 2 protein (133 aa).

Active-site residues include cysteine 23 and histidine 73.

This sequence belongs to the cell wall amidase Dae2/Tae2-like family.

It localises to the host periplasm. Its subcellular location is the secreted. It functions in the pathway cell wall degradation; peptidoglycan degradation. Toxic component of a contact-dependent interbacterial competition system (also called effector-immunity systems). Secreted by the SPI-6 type VI secretion system, probably into the periplasm of bacterial target cells. A cell wall amidase with specificity toward the D-meso-DAP-D-alanine bond (D-meso-diaminopimelic-D-alanine) found in peptidoglycan of Gram-negative bacteria. Toxicity is counteracted by a cognate immunity protein Tai2 (t2585), but not immunity proteins associated with a similar endopeptidase in other bacteria. In vitro degrades peptidoglycans from Gram-negative but not Gram-positive bacteria. The protein is Type VI secretion amidase effector 2 protein of Salmonella typhi.